Here is a 441-residue protein sequence, read N- to C-terminus: Glutamyl-tRNA reductase (441 aa).

Substrate is bound by residues 49–52, Ser109, 114–116, and Gln120; these read TCNR and EGQ. Residue Cys50 is the Nucleophile of the active site. 198-203 contacts NADP(+); the sequence is GAGRMS.

This sequence belongs to the glutamyl-tRNA reductase family. Homodimer.

The catalysed reaction is (S)-4-amino-5-oxopentanoate + tRNA(Glu) + NADP(+) = L-glutamyl-tRNA(Glu) + NADPH + H(+). Its pathway is porphyrin-containing compound metabolism; protoporphyrin-IX biosynthesis; 5-aminolevulinate from L-glutamyl-tRNA(Glu): step 1/2. It functions in the pathway porphyrin-containing compound metabolism; chlorophyll biosynthesis. Its function is as follows. Catalyzes the NADPH-dependent reduction of glutamyl-tRNA(Glu) to glutamate 1-semialdehyde (GSA). The sequence is that of Glutamyl-tRNA reductase from Prochlorococcus marinus (strain NATL1A).